The following is a 67-amino-acid chain: ATP synthase protein 8 (67 aa).

A helical membrane pass occupies residues Thr8–Met24. Lys54 carries the N6-acetyllysine; alternate modification. The residue at position 54 (Lys54) is an N6-succinyllysine; alternate. Residue Lys57 is modified to N6-acetyllysine.

Belongs to the ATPase protein 8 family. As to quaternary structure, F-type ATPases have 2 components, CF(1) - the catalytic core - and CF(0) - the membrane proton channel. Component of an ATP synthase complex composed of ATP5PB, ATP5MC1, ATP5F1E, ATP5PD, ATP5ME, ATP5PF, ATP5MF, MT-ATP6, MT-ATP8, ATP5F1A, ATP5F1B, ATP5F1D, ATP5F1C, ATP5PO, ATP5MG, ATP5MK and ATP5MJ. Interacts with PRICKLE3.

It localises to the mitochondrion membrane. Mitochondrial membrane ATP synthase (F(1)F(0) ATP synthase or Complex V) produces ATP from ADP in the presence of a proton gradient across the membrane which is generated by electron transport complexes of the respiratory chain. F-type ATPases consist of two structural domains, F(1) - containing the extramembraneous catalytic core and F(0) - containing the membrane proton channel, linked together by a central stalk and a peripheral stalk. During catalysis, ATP synthesis in the catalytic domain of F(1) is coupled via a rotary mechanism of the central stalk subunits to proton translocation. Part of the complex F(0) domain. Minor subunit located with subunit a in the membrane. The chain is ATP synthase protein 8 (MT-ATP8) from Microtus pennsylvanicus (Meadow vole).